Reading from the N-terminus, the 343-residue chain is Nod factor export ATP-binding protein I (343 aa).

Residues 1 to 14 (MQLLTRANVSSSPS) show a composition bias toward polar residues. The segment at 1-38 (MQLLTRANVSSSPSRRPESNALKQKCHGHSNADNSLSR) is disordered. Residues 45–275 (IELTNVSKSY…QIGCDVIEIY (231 aa)) form the ABC transporter domain. Residue 77 to 84 (GPNGAGKS) participates in ATP binding.

This sequence belongs to the ABC transporter superfamily. Lipooligosaccharide exporter (TC 3.A.1.102) family. The complex is composed of two ATP-binding proteins (NodI) and two transmembrane proteins (NodJ).

It is found in the cell inner membrane. In terms of biological role, part of the ABC transporter complex NodIJ involved in the export of the nodulation factors (Nod factors), the bacterial signal molecules that induce symbiosis and subsequent nodulation induction. Nod factors are LCO (lipo-chitin oligosaccharide), a modified beta-1,4-linked N-acetylglucosamine oligosaccharide. This subunit is responsible for energy coupling to the transport system. In Sinorhizobium fredii (strain NBRC 101917 / NGR234), this protein is Nod factor export ATP-binding protein I.